Consider the following 88-residue polypeptide: Small ribosomal subunit protein uS15 (88 aa).

Belongs to the universal ribosomal protein uS15 family. Part of the 30S ribosomal subunit. Forms a bridge to the 50S subunit in the 70S ribosome, contacting the 23S rRNA.

Its function is as follows. One of the primary rRNA binding proteins, it binds directly to 16S rRNA where it helps nucleate assembly of the platform of the 30S subunit by binding and bridging several RNA helices of the 16S rRNA. Forms an intersubunit bridge (bridge B4) with the 23S rRNA of the 50S subunit in the ribosome. This chain is Small ribosomal subunit protein uS15, found in Geobacter sulfurreducens (strain ATCC 51573 / DSM 12127 / PCA).